Reading from the N-terminus, the 1486-residue chain is Chromosome partition protein MukB (1486 aa).

34-41 (GGNGAGKS) contacts ATP. 3 coiled-coil regions span residues 326-418 (LEAD…QYNQ), 444-480 (LETF…QAYQ), and 509-603 (RHLA…RAPV). A flexible hinge region spans residues 666–783 (PGGSEDQRLN…EVPLFGRAAR (118 aa)). 3 coiled-coil regions span residues 835-923 (EAEI…AKLE), 977-1115 (EMLS…TAKA), and 1209-1266 (VEAI…QNVS).

This sequence belongs to the SMC family. MukB subfamily. In terms of assembly, homodimerization via its hinge domain. Binds to DNA via its C-terminal region. Interacts, and probably forms a ternary complex, with MukE and MukF via its C-terminal region. The complex formation is stimulated by calcium or magnesium. Interacts with tubulin-related protein FtsZ.

Its subcellular location is the cytoplasm. The protein localises to the nucleoid. In terms of biological role, plays a central role in chromosome condensation, segregation and cell cycle progression. Functions as a homodimer, which is essential for chromosome partition. Involved in negative DNA supercoiling in vivo, and by this means organize and compact chromosomes. May achieve or facilitate chromosome segregation by condensation DNA from both sides of a centrally located replisome during cell division. The chain is Chromosome partition protein MukB from Escherichia fergusonii (strain ATCC 35469 / DSM 13698 / CCUG 18766 / IAM 14443 / JCM 21226 / LMG 7866 / NBRC 102419 / NCTC 12128 / CDC 0568-73).